A 193-amino-acid polypeptide reads, in one-letter code: MYGAVLPGLFFIFISCVVASSNDVKDGGADRGAHSDRGGMWFGPRIGKRSLRMATEDNRQAFFKLLEAADALKYYYDQLPYEMQADEPEARVTKKVIFTPKLGRSLSYEDKMFDNVEFTPRLGRRLADDTPATPADQEMYRPDPEQIDSRTKYFSPRLGRTMNFSPRLGRELAYEMLPSKVRVVRSTNKTQST.

The signal sequence occupies residues 1–19 (MYGAVLPGLFFIFISCVVA). The residue at position 46 (isoleucine 46) is an Isoleucine amide. Leucine amide occurs at positions 102 and 122. A disordered region spans residues 124–158 (RRLADDTPATPADQEMYRPDPEQIDSRTKYFSPRL). The span at 138-151 (EMYRPDPEQIDSRT) shows a compositional bias: basic and acidic residues. Residues leucine 158 and leucine 168 each carry the leucine amide modification. A propeptide spanning residues 186–193 (STNKTQST) is cleaved from the precursor.

It belongs to the pyrokinin family. Expressed in the mandibular, maxillary and labial neuromeres of the male and female brain-subesophageal ganglions, in the corpora cardiaca and all around the corpora allata, and at a lower level in the brain near the calyx and pedunculus of the mushroom body (at protein level). Expressed in larvae and adult of both sexes (at protein level). In terms of tissue distribution, expressed in corpora cardiaca (CC), corpora allata (CA) and gnathal ganglion (GNG) (at protein level). Expression in CC and CA detected in most animals, in GNG in some (at protein level). As to expression, expression not detected in CC, CA, AL or GNG (at protein level). Expressed in corpora cardiaca (CC), corpora allata (CA), antennal lobe (AL) and gnathal ganglion (GNG) (at protein level). Expression in CC, CA and GNG detected in most animals, expression in AL detected in few (at protein level). In terms of tissue distribution, expressed in corpora cardiaca (CC), corpora allata (CA), antennal lobe (AL) and gnathal ganglion (GNG) (at protein level). Expression in CC, CA and GNG detected in all animals, expression in AL detected in some (at protein level). As to expression, expressed in corpora cardiaca (CC), corpora allata (CA), antennal lobe (AL) and gnathal ganglion (GNG) (at protein level). Expression in CC, CA and GNG detected in most animals, expression in AL detected in some animals (at protein level).

It localises to the secreted. In terms of biological role, a hormone that controls sex pheromone production in female moths and pheromone responsiveness in male. The chain is PBAN-type neuropeptides from Agrotis ipsilon (Black cutworm moth).